The following is a 100-amino-acid chain: uncharacterized protein (100 aa).

Residues 42–84 (PGEPWRTAGGIGEGGAGGDGAAAGGEGDVHGRPAGAEDGEDGA) form a disordered region. Over residues 50–67 (GGIGEGGAGGDGAAAGGE) the composition is skewed to gly residues.

This is an uncharacterized protein from Torque teno tamarin virus (isolate So-TTV2).